A 372-amino-acid polypeptide reads, in one-letter code: Embryonic growth/differentiation factor 1 (372 aa).

Residues 1-29 (MPPPQQGPCGHHLLLLLALLLPSLPLTRA) form the signal peptide. The propeptide occupies 30–253 (PVPPGPAAAL…LCHPLARPRR (224 aa)). The segment at 67 to 86 (RRRDPQETRSGSRRTSPGVT) is disordered. N-linked (GlcNAc...) asparagine glycosylation is present at Asn-206. 3 cysteine pairs are disulfide-bonded: Cys-267/Cys-337, Cys-296/Cys-369, and Cys-300/Cys-371.

It belongs to the TGF-beta family. Homodimer; disulfide-linked. As to expression, expressed in the brain.

The protein resides in the secreted. Functionally, may mediate cell differentiation events during embryonic development. In Homo sapiens (Human), this protein is Embryonic growth/differentiation factor 1 (GDF1).